We begin with the raw amino-acid sequence, 181 residues long: Ribosome maturation factor RimM (181 aa).

The region spanning 98-177 (EGEFFYCDLI…KITTHNAKTL (80 aa)) is the PRC barrel domain.

It belongs to the RimM family. As to quaternary structure, binds ribosomal protein uS19.

The protein resides in the cytoplasm. Its function is as follows. An accessory protein needed during the final step in the assembly of 30S ribosomal subunit, possibly for assembly of the head region. Essential for efficient processing of 16S rRNA. May be needed both before and after RbfA during the maturation of 16S rRNA. It has affinity for free ribosomal 30S subunits but not for 70S ribosomes. The polypeptide is Ribosome maturation factor RimM (Helicobacter pylori (strain J99 / ATCC 700824) (Campylobacter pylori J99)).